Here is a 411-residue protein sequence, read N- to C-terminus: Short chain dehydrogenase ausT (411 aa).

NADP(+) is bound by residues D105, Q137, Y249, and R253. Y249 (proton donor) is an active-site residue. Y263 functions as the Proton donor in the catalytic mechanism.

It belongs to the short-chain dehydrogenases/reductases (SDR) family.

The protein operates within secondary metabolite biosynthesis; terpenoid biosynthesis. Short chain dehydrogenase; part of the gene cluster that mediates the biosynthesis of calidodehydroaustin, a fungal meroterpenoid. The first step of the pathway is the synthesis of 3,5-dimethylorsellinic acid by the polyketide synthase ausA. 3,5-dimethylorsellinic acid is then prenylated by the polyprenyl transferase ausN. Further epoxidation by the FAD-dependent monooxygenase ausM and cyclization by the probable terpene cyclase ausL lead to the formation of protoaustinoid A. Protoaustinoid A is then oxidized to spiro-lactone preaustinoid A3 by the combined action of the FAD-binding monooxygenases ausB and ausC, and the dioxygenase ausE. Acid-catalyzed keto-rearrangement and ring contraction of the tetraketide portion of preaustinoid A3 by ausJ lead to the formation of preaustinoid A4. The aldo-keto reductase ausK, with the help of ausH, is involved in the next step by transforming preaustinoid A4 into isoaustinone which is in turn hydroxylated by the P450 monooxygenase ausI to form austinolide. The cytochrome P450 monooxygenase ausG modifies austinolide to austinol. Austinol is further acetylated to austin by the O-acetyltransferase ausP, which spontaneously changes to dehydroaustin. The cytochrome P450 monooxygenase ausR then converts dehydroaustin is into 7-dehydrodehydroaustin. The hydroxylation catalyzed by ausR permits the O-acetyltransferase ausQ to add an additional acetyl group to the molecule, leading to the formation of acetoxydehydroaustin. The short chain dehydrogenase ausT catalyzes the reduction of the double bond present between carbon atoms 1 and 2 to convert 7-dehydrodehydroaustin into 1,2-dihydro-7-hydroxydehydroaustin. AusQ catalyzes not only an acetylation reaction but also the addition of the PKS ausV diketide product to 1,2-dihydro-7-hydroxydehydroaustin, forming precalidodehydroaustin. Finally, the iron/alpha-ketoglutarate-dependent dioxygenase converts precalidodehydroaustin into calidodehydroaustin. The polypeptide is Short chain dehydrogenase ausT (Aspergillus calidoustus).